The primary structure comprises 1233 residues: Glutamate receptor ionotropic, NMDA 2C (1233 aa).

The first 19 residues, 1 to 19, serve as a signal peptide directing secretion; the sequence is MGGALGPALLLTSLFGAWA. Residues 20–554 are Extracellular-facing; sequence GLGPGQGEQG…SAFLEPYSPA (535 aa). N-linked (GlcNAc...) asparagine glycans are attached at residues Asn70 and Asn73. Cys82 and Cys317 are joined by a disulfide. Asn337 and Asn438 each carry an N-linked (GlcNAc...) asparagine glycan. 2 cysteine pairs are disulfide-bonded: Cys426-Cys453 and Cys433-Cys454. The L-glutamate site is built by Ser509, Thr511, and Arg516. Residue Asn539 is glycosylated (N-linked (GlcNAc...) asparagine). The chain crosses the membrane as a helical span at residues 555–575; the sequence is VWVMMFVMCLTVVAITVFMFE. The Cytoplasmic segment spans residues 576 to 598; that stretch reads YFSPVSYNQNLTRGKKSGGPAFT. The discontinuously helical intramembrane region spans 599–611; the sequence is IGKSVWLLWALVF. The pore-forming stretch occupies residues 601 to 620; sequence KSVWLLWALVFNNSVPIENP. Residues 612 to 626 are Cytoplasmic-facing; it reads NNSVPIENPRGTTSK. Residues 627–644 form a helical membrane-spanning segment; it reads IMVLVWAFFAVIFLASYT. The Extracellular segment spans residues 645-813; that stretch reads ANLAAFMIQE…EVMSSKLDID (169 aa). A glycan (N-linked (GlcNAc...) asparagine) is linked at Asn685. Residues Ser687, Thr688, and Asp729 each contribute to the L-glutamate site. Cys743 and Cys798 form a disulfide bridge. The chain crosses the membrane as a helical span at residues 814–836; it reads NMAGVFYMLLVAMGLALLVFAWE. The Cytoplasmic portion of the chain corresponds to 837 to 1233; sequence HLVYWKLRHS…RRISSLESEV (397 aa). Phosphoserine is present on residues Ser875, Ser881, and Ser912. A disordered region spans residues 920-994; it reads IENWGGGRRA…GPPLSDVSRV (75 aa). Pro residues-rich tracts occupy residues 929 to 956 and 975 to 987; these read APPP…PEPS and PQPP…PGPP. Positions 1231-1233 match the PDZ-binding motif; it reads SEV.

The protein belongs to the glutamate-gated ion channel (TC 1.A.10.1) family. NR2C/GRIN2C subfamily. Heterotetramer. Forms heterotetrameric channels composed of two GluN1/zeta subunits (GRIN1), and two identical GluN2/epsilon subunits (GRIN2A, GRIN2B, GRIN2C or GRIN2D) or GluN3 subunits (GRIN3A or GRIN3B) (in vitro). In vivo, the subunit composition may depend on the expression levels of the different subunits. Interacts with PDZ domains of PATJ and DLG4. Interacts (via PDZ-binding motif) with SNX27 (via PDZ domain); the interaction is required for recycling to the plasma membrane when endocytosed and prevent degradation in lysosomes. Mainly expressed in brain with predominant expression is in the cerebellum, also present in the hippocampus, amygdala, caudate nucleus, corpus callosum, subthalamic nuclei and thalamus. Detected in the heart, skeletal muscle and pancreas.

It localises to the cell membrane. Its subcellular location is the postsynaptic cell membrane. The enzyme catalyses Ca(2+)(in) = Ca(2+)(out). It catalyses the reaction Na(+)(in) = Na(+)(out). The catalysed reaction is K(+)(in) = K(+)(out). In terms of biological role, component of N-methyl-D-aspartate (NMDA) receptors (NMDARs) that function as heterotetrameric, ligand-gated cation channels with high calcium permeability and voltage-dependent block by Mg(2+). Participates in synaptic plasticity for learning and memory formation by contributing to the slow phase of excitatory postsynaptic current and long-term synaptic potentiation. Channel activation requires binding of the neurotransmitter L-glutamate to the GluN2 subunit, glycine or D-serine binding to the GluN1 subunit, plus membrane depolarization to eliminate channel inhibition by Mg(2+). NMDARs mediate simultaneously the potasium efflux and the influx of calcium and sodium. Each GluN2 subunit confers differential attributes to channel properties, including activation, deactivation and desensitization kinetics, pH sensitivity, Ca2(+) permeability, and binding to allosteric modulators. This chain is Glutamate receptor ionotropic, NMDA 2C, found in Homo sapiens (Human).